The primary structure comprises 612 residues: Chaperone protein DnaK (612 aa).

A Phosphothreonine; by autocatalysis modification is found at threonine 174. The segment at 579–612 is disordered; it reads GSAGTGAGSQAGSAAGSGDGQSMDAEFKVKDEDK. Over residues 581–597 the composition is skewed to gly residues; sequence AGTGAGSQAGSAAGSGD. Residues 603–612 are compositionally biased toward basic and acidic residues; it reads AEFKVKDEDK.

This sequence belongs to the heat shock protein 70 family.

Acts as a chaperone. In Symbiobacterium thermophilum (strain DSM 24528 / JCM 14929 / IAM 14863 / T), this protein is Chaperone protein DnaK.